We begin with the raw amino-acid sequence, 131 residues long: DNA-directed RNA polymerase subunit Rpo8 (131 aa).

The protein belongs to the archaeal Rpo8 RNA polymerase subunit family. As to quaternary structure, part of the 13-subunit RNA polymerase complex. Interacts with Rpo1N on the periphery of the clamp head.

Its subcellular location is the cytoplasm. The enzyme catalyses RNA(n) + a ribonucleoside 5'-triphosphate = RNA(n+1) + diphosphate. DNA-dependent RNA polymerase (RNAP) catalyzes the transcription of DNA into RNA using the four ribonucleoside triphosphates as substrates. The sequence is that of DNA-directed RNA polymerase subunit Rpo8 from Saccharolobus shibatae (strain ATCC 51178 / DSM 5389 / JCM 8931 / NBRC 15437 / B12) (Sulfolobus shibatae).